The primary structure comprises 200 residues: Large ribosomal subunit protein uL4 (200 aa).

The interval 38 to 68 (GRQGSKQQKTRSDVRGGGKRPWRQKGTGRAR) is disordered. Over residues 54-65 (GGKRPWRQKGTG) the composition is skewed to basic residues.

This sequence belongs to the universal ribosomal protein uL4 family. Part of the 50S ribosomal subunit.

One of the primary rRNA binding proteins, this protein initially binds near the 5'-end of the 23S rRNA. It is important during the early stages of 50S assembly. It makes multiple contacts with different domains of the 23S rRNA in the assembled 50S subunit and ribosome. Functionally, forms part of the polypeptide exit tunnel. The sequence is that of Large ribosomal subunit protein uL4 from Pseudomonas savastanoi pv. phaseolicola (strain 1448A / Race 6) (Pseudomonas syringae pv. phaseolicola (strain 1448A / Race 6)).